A 924-amino-acid polypeptide reads, in one-letter code: MDSTNGNGADLESANGANGSGVTEALPPPPPVIPPNVEPVRVKTELAEKKGPVRVPMARKGFGTRGQKIPLLTNHFKVDVANLQGHFFHYSVALFYDDGRPVEQKGVGRKILDKVHQTYHSDLDGKEFAYDGEKTLFTYGALPSNKMDFSVVLEEVSATRANGNGSPNGNESPSDGDRKRLRRPNRSKNFRVEISYAAKIPLQALANAMRGQESENSQEAIRVLDIILRQHAARQGCLLVRQSFFHNDPTNCEPVGGNILGCRGFHSSFRTTQGGMSLNMDVTTTMIIKPGPVVDFLIANQNARDPYSIDWSKAKRTLKNLRVKVSPSGQEFKITGLSDKPCREQTFELKKRNPNENGEFETTEVTVADYFRDTRHIDLQYSADLPCINVGKPKRPTYIPLELCALVPLQRYTKALTTFQRSALVEKSRQKPQERMTVLSKALKVSNYDAEPLLRSCGISISSNFTQVEGRVLPAPKLKMGCGSETFPRNGRWNFNNKEFVEPTKIQRWVVVNFSARCNVRQVVDDLIKIGGSKGIEIASPFQVFEEGNQFRRAPPMIRVENMFKDIQSKLPGVPQFILCVLPDKKNSDLYGPWKKKNLTEFGIVTQCMAPTRQPNDQYLTNLLLKINAKLGGLNSMLSVERTPAFTVISKVPTIILGMDVSHGSPGQSDVPSIAAVVSSREWPLISKYRASVRTQPSKAEMIESLVKKNGTEDDGIIKELLVDFYTSSNKRKPEHIIIFRDGVSESQFNQVLNIELDQIIEACKLLDANWNPKFLLLVAQKNHHTKFFQPTSPENVPPGTIIDNKICHPKNNDFYLCAHAGMIGTTRPTHYHVLYDEIGFSADELQELVHSLSYVYQRSTSAISVVAPICYAHLAAAQLGTFMKFEDQSETSSSHGGITAPGPISVAQLPRLKDNVANSMFFC.

2 disordered regions span residues 1 to 37 (MDSTNGNGADLESANGANGSGVTEALPPPPPVIPPNV) and 159 to 185 (TRANGNGSPNGNESPSDGDRKRLRRPN). Residues 26–37 (LPPPPPVIPPNV) are compositionally biased toward pro residues. Residues 162-173 (NGNGSPNGNESP) show a composition bias toward low complexity. The region spanning 292 to 408 (PVVDFLIANQ…IPLELCALVP (117 aa)) is the PAZ domain. Positions 577–885 (FILCVLPDKK…AAAQLGTFMK (309 aa)) constitute a Piwi domain. The Nuclear localization signal motif lies at 584 to 591 (DKKNSDLY).

This sequence belongs to the argonaute family. Ago subfamily. Interacts with NRPE1 (via C-terminus). Binding to NRPE1 is required for its function in RdDM. Interacts with turnip crinkle virus (TCV) capsid protein P38; this interaction inhibits probably RNA silencing ability of AGO4. Interacts with SDE3. Binds to RDM3. Binds chromatin at loci subject to transcriptional silencing. Interacts with MBD6. Expressed in embryos, mature leaves, vascular tissue of the sepals, stamens and stigma, at the tip of the style and siliques.

It localises to the nucleus. Its subcellular location is the nucleolus. The protein localises to the nucleoplasm. It is found in the cajal body. In terms of biological role, together with RDM3, required for transcriptional gene silencing (TGS) by DNA methylation and repressive histone modifications (H3K9me2) of several chromatin loci. Component of the RISC complex that associate with the small interfering RNA (siRNA) pathway involved in direct cytosine methylation at endogenous DNA repeats. Forms a AGO4/NRPE1/siRNA complex in cajal body, facilitating its function in RNA-directed gene silencing of target loci. Required for CpNpG and asymmetric DNA methylation as well as histone H3 'Lys-9' methylation (H3K9me) at SUP and SN1 loci. May be not required for CpG methylation. Required for the production and maintenance of retrotransposon SN1 and Copia and ribosomal 5S 25 nucleotide siRNAs specialized in gene silencing at chromatin level. Involved in de novo methylation of FWA gene and required for the maintenance of RNA-directed DNA methylation (RdDM) triggered by inverted repeat transgenes. Interacts with miRNA miR390 and miR172, targeting respectively TAS3 and AP2 mRNAs, and mediates cleavage of miRNA targets. Associates mainly with small RNAs of 24 nucleotide in length and preferentially recruits small RNAs with a 5' terminal adenosine. Targeted by the turnip yellows virus (TuYV) protein P0 (via F-box-like domain) for probable proteasome degradation and thereby inactivating AGO4 function in RNA silencing. Required for resistance to the bacterial pathogen P.syringae. Works independently of the RdDM pathway in mediating resistance to P.syringae. RdDM is involved in viral genome methylation as an epigenetic defense against geminiviruses. The chain is Protein argonaute 4 from Arabidopsis thaliana (Mouse-ear cress).